Consider the following 409-residue polypeptide: Inactive serine protease 35 (409 aa).

The N-terminal stretch at 1–20 is a signal peptide; the sequence is MENTLLWLVILIPGWALSDG. The N-linked (GlcNAc...) asparagine glycan is linked to asparagine 90. Residues 124–404 enclose the Peptidase S1 domain; sequence VYGTDSRFSI…ICLWIHGNAA (281 aa). Cysteine 154 and cysteine 170 are disulfide-bonded. The span at 188–207 shows a compositional bias: basic residues; that stretch reads VLKMRNKGGRKKRRGSKRSR. The disordered stretch occupies residues 188–247; sequence VLKMRNKGGRKKRRGSKRSRREAESAGQSQAHLRESTTQRPGKKSRRGPRVTQGRPSFQW.

It belongs to the peptidase S1 family. In terms of tissue distribution, in ovary, it localizes to the theca cells of pre-antral follicles, the theca and granulosa cells of pre-ovulatory and ovulatory follicles, as well as to the developing corpus luteum.

Its subcellular location is the secreted. The protein is Inactive serine protease 35 (Prss35) of Mus musculus (Mouse).